Reading from the N-terminus, the 248-residue chain is tRNA (guanine-N(1)-)-methyltransferase (248 aa).

Residues glycine 114 and 134–139 contribute to the S-adenosyl-L-methionine site; that span reads IGDYVL.

It belongs to the RNA methyltransferase TrmD family. As to quaternary structure, homodimer.

Its subcellular location is the cytoplasm. It catalyses the reaction guanosine(37) in tRNA + S-adenosyl-L-methionine = N(1)-methylguanosine(37) in tRNA + S-adenosyl-L-homocysteine + H(+). Functionally, specifically methylates guanosine-37 in various tRNAs. This chain is tRNA (guanine-N(1)-)-methyltransferase, found in Blochmanniella floridana.